We begin with the raw amino-acid sequence, 1488 residues long: Phenolphthiocerol/phthiocerol polyketide synthase subunit E (1488 aa).

Residues 5–438 (ENAIAVVGMA…GTNAHVVLEE (434 aa)) form the Ketosynthase family 3 (KS3) domain. Residues Cys184, His320, and His361 each act as for beta-ketoacyl synthase activity in the active site. Residues 551 to 868 (VFLFPGQGAQ…GELWSAGVEV (318 aa)) form an acyltransferase region. The For malonyltransferase activity role is filled by Ser641. A Carrier domain is found at 930-1004 (NGESQTEVTL…SLTAAVDASF (75 aa)). Ser965 is subject to O-(pantetheine 4'-phosphoryl)serine. 1286 to 1331 (EGVVAVELEGEGRSVLRPDVDLRRTVGWFTTYYPVPLACATGLGAL) serves as a coordination point for NADP(+).

NADP(+) serves as cofactor. Requires pantetheine 4'-phosphate as cofactor.

The enzyme catalyses icosanoyl-[(phenol)carboxyphthiodiolenone synthase] + 2 (S)-methylmalonyl-CoA + 3 malonyl-CoA + 5 NADPH + 10 H(+) = C32-carboxyphthiodiolenone-[(phenol)carboxyphthiodiolenone synthase] + 5 CO2 + 5 NADP(+) + 5 CoA + 2 H2O. It carries out the reaction docosanoyl-[(phenol)carboxyphthiodiolenone synthase] + 2 (S)-methylmalonyl-CoA + 3 malonyl-CoA + 5 NADPH + 10 H(+) = C34-carboxyphthiodiolenone-[(phenol)carboxyphthiodiolenone synthase] + 5 CO2 + 5 NADP(+) + 5 CoA + 2 H2O. It catalyses the reaction 17-(4-hydroxyphenyl)heptadecanoyl-[(phenol)carboxyphthiodiolenone synthase] + 2 (S)-methylmalonyl-CoA + 3 malonyl-CoA + 5 NADPH + 10 H(+) = C35-(phenol)carboxyphthiodiolenone-[(phenol)carboxyphthiodiolenone synthase] + 5 CO2 + 5 NADP(+) + 5 CoA + 2 H2O. The catalysed reaction is 19-(4-hydroxyphenyl)nonadecanoyl-[(phenol)carboxyphthiodiolenone synthase] + 2 (S)-methylmalonyl-CoA + 3 malonyl-CoA + 5 NADPH + 10 H(+) = C37-(phenol)carboxyphthiodiolenone-[(phenol)carboxyphthiodiolenone synthase] + 5 CO2 + 5 NADP(+) + 5 CoA + 2 H2O. It functions in the pathway lipid metabolism; fatty acid biosynthesis. Functionally, part of the PpsABCDE complex involved in the biosynthesis of the lipid core common to phthiocerols and phenolphthiocerols by successive additions of malonyl-CoA or methylmalonyl-CoA extender units. PpsA can accept as substrate the activated forms of either icosanoyl (C20), docosanoyl (C22) or lignoceroyl (C24) groups from FadD26, or a (4-hydroxyphenyl)-C17 or (4-hydroxyphenyl)-C19 fatty acyl from FadD29. PpsA initiates the biosynthesis and extends its substrate using a malonyl-CoA extender unit. The PpsB and PpsC proteins add the second and third malonyl-CoA extender units. PpsD adds an (R)-methylmalonyl unit and PpsE adds a second (R)-methylmalonyl unit. The incorporation of the methylmalonyl units results in formation of two branched methyl groups in the elongated product. The chain is Phenolphthiocerol/phthiocerol polyketide synthase subunit E (ppsE) from Mycobacterium tuberculosis (strain CDC 1551 / Oshkosh).